The chain runs to 732 residues: DNA gyrase subunit B, mitochondrial (732 aa).

Residues 513–620 enclose the Toprim domain; that stretch reads SEIFIVEGDS…RYQRALFDAG (108 aa). 3 residues coordinate Mg(2+): Glu-519, Asp-593, and Asp-595.

The protein belongs to the type II topoisomerase GyrB family. Made up of two chains. The A chain is responsible for DNA breakage and rejoining; the B chain catalyzes ATP hydrolysis. It depends on Mg(2+) as a cofactor. Requires Mn(2+) as cofactor. Ca(2+) serves as cofactor.

The protein localises to the mitochondrion. It catalyses the reaction ATP-dependent breakage, passage and rejoining of double-stranded DNA.. A type II topoisomerase that negatively supercoils closed circular double-stranded DNA in an ATP-dependent manner. The sequence is that of DNA gyrase subunit B, mitochondrial (GYRBM) from Arabidopsis thaliana (Mouse-ear cress).